Consider the following 354-residue polypeptide: Petrobactin import system permease protein FatC (354 aa).

9 helical membrane-spanning segments follow: residues 37–57 (YWIV…GLLV), 77–97 (IVAI…TVAF), 116–136 (LYSA…LINF), 141–161 (SFLF…GWLL), 168–188 (LQLM…VSTF), 214–234 (PAYF…IFAH), 259–279 (VIYT…LIGP), 302–322 (YIFP…YFLM), and 329–349 (QGVV…TIVL).

It belongs to the binding-protein-dependent transport system permease family. FecCD subfamily. As to quaternary structure, the complex is composed of two ATP-binding proteins (FatE), two transmembrane proteins (FatC and FatD) and a solute-binding protein (FpuA).

It is found in the cell membrane. Functionally, part of an ABC transporter complex involved in ferric-petrobactin uptake. Probably responsible for the translocation of the substrate across the membrane. This Bacillus anthracis protein is Petrobactin import system permease protein FatC.